A 123-amino-acid chain; its full sequence is Large ribosomal subunit protein uL22c (123 aa).

This sequence belongs to the universal ribosomal protein uL22 family. In terms of assembly, part of the 50S ribosomal subunit.

Its subcellular location is the plastid. The protein localises to the chloroplast. Its function is as follows. This protein binds specifically to 23S rRNA. In terms of biological role, the globular domain of the protein is located near the polypeptide exit tunnel on the outside of the subunit, while an extended beta-hairpin is found that lines the wall of the exit tunnel in the center of the 70S ribosome. This Illicium oligandrum (Star anise) protein is Large ribosomal subunit protein uL22c (rpl22).